The chain runs to 374 residues: Large ribosomal subunit protein bL27m (374 aa).

The N-terminal 41 residues, 1-41 (MLRLSGVKSAVRARAAAGAAFSVSLSGPQAVSLLALPLVRH), are a transit peptide targeting the mitochondrion.

It belongs to the bacterial ribosomal protein bL27 family.

The protein resides in the mitochondrion. Functionally, component of the large subunit of mitochondrial ribosome. The polypeptide is Large ribosomal subunit protein bL27m (MRPL2) (Yarrowia lipolytica (strain CLIB 122 / E 150) (Yeast)).